Reading from the N-terminus, the 188-residue chain is Peptidyl-tRNA hydrolase (188 aa).

F14 provides a ligand contact to tRNA. H19 serves as the catalytic Proton acceptor. The tRNA site is built by Y64, N66, and N112.

Belongs to the PTH family. In terms of assembly, monomer.

The protein resides in the cytoplasm. It carries out the reaction an N-acyl-L-alpha-aminoacyl-tRNA + H2O = an N-acyl-L-amino acid + a tRNA + H(+). Hydrolyzes ribosome-free peptidyl-tRNAs (with 1 or more amino acids incorporated), which drop off the ribosome during protein synthesis, or as a result of ribosome stalling. In terms of biological role, catalyzes the release of premature peptidyl moieties from peptidyl-tRNA molecules trapped in stalled 50S ribosomal subunits, and thus maintains levels of free tRNAs and 50S ribosomes. This is Peptidyl-tRNA hydrolase from Aster yellows witches'-broom phytoplasma (strain AYWB).